The following is a 574-amino-acid chain: Regulatory protein NPR4 (574 aa).

The interval 1–21 (MAATAIEPSSSISFTSSHLSN) is disordered. A compositionally biased stretch (low complexity) spans 9–20 (SSSISFTSSHLS). Ser-11 is subject to Phosphoserine. The BTB domain maps to 54 to 130 (TDAEIIIEEE…IYTGRLKPFP (77 aa)). The segment at 133 to 147 (VSTCVDSVCAHDSCK) adopts a C2HC NPR-type zinc-finger fold. 4 residues coordinate Zn(2+): Cys-136, Cys-141, His-143, and Cys-146. ANK repeat units follow at residues 252-280 (ERTG…DITL), 281-311 (DQAN…DVNF), and 315-344 (RGYT…NASD). Positions 373-516 (EPSKYRLCID…MDQYMDEEIP (144 aa)) are salicylic acid-binding core (SBC). Arg-419 contacts salicylate. Positions 521–574 (PEKGTVKERRQKRMRYNELKNDVKKAYSKDKVARSCLSSSSPASSLREALENPT) are disordered. The segment covering 535 to 553 (RYNELKNDVKKAYSKDKVA) has biased composition (basic and acidic residues). The span at 554–567 (RSCLSSSSPASSLR) shows a compositional bias: low complexity.

Belongs to the plant 'ANKYRIN-BTB/POZ' family. 'NPR1-like' subfamily. As to quaternary structure, forms homodimers, homotetramers and heterodimers with NPR3 in the presence of salicylic acid (SA). Interacts with TGA2, TGA3, TGA5, TGA6 and TGA7. Interacts with CUL3A, a core component of the cullin-RING ubiquitin ligases (CRL). Binds to NPR1; this interaction is disrupted by association with SA, probably due to conformational changes.

It is found in the nucleus. It functions in the pathway protein modification; protein ubiquitination. Functionally, salicylic acid (SA)-binding substrate-specific adapter of an E3 ubiquitin-protein ligase complex (CUL3-RBX1-BTB) which mediates the ubiquitination and subsequent proteasomal degradation of NPR1 in the absence of SA. Together with NPR3, acts as receptor of salicylic acid to monitor immunity in a NPR1-dependent manner and induce systemic acquired resistance (SAR). Involved in the regulation of basal defense responses against pathogens, and may be implicated in the cross-talk between the SA- and JA-dependent signaling pathways. The protein is Regulatory protein NPR4 of Arabidopsis thaliana (Mouse-ear cress).